A 130-amino-acid chain; its full sequence is Small ribosomal subunit protein uS9 (130 aa).

The tract at residues 108–130 (PRMKERRKYGLKKARRAPQFSKR) is disordered. Basic residues predominate over residues 111–130 (KERRKYGLKKARRAPQFSKR).

Belongs to the universal ribosomal protein uS9 family.

This chain is Small ribosomal subunit protein uS9, found in Desulforamulus reducens (strain ATCC BAA-1160 / DSM 100696 / MI-1) (Desulfotomaculum reducens).